The following is a 151-amino-acid chain: Small ribosomal subunit protein uS15 (151 aa).

Belongs to the universal ribosomal protein uS15 family.

This Wuchereria bancrofti protein is Small ribosomal subunit protein uS15 (RPS13).